A 24-amino-acid chain; its full sequence is 47 kDa cell wall protein (24 aa).

Its subcellular location is the secreted. It is found in the cell wall. In Nicotiana tabacum (Common tobacco), this protein is 47 kDa cell wall protein.